We begin with the raw amino-acid sequence, 407 residues long: WEB family protein At3g51720 (407 aa).

Coiled coils occupy residues 72–99 (KVLK…DKEN), 128–217 (SVGL…ARAA), and 247–278 (EEIL…EAEE).

This sequence belongs to the WEB family.

The protein is WEB family protein At3g51720 of Arabidopsis thaliana (Mouse-ear cress).